The sequence spans 33 residues: GTTCKCGSTLGIYWFAVTSCPPGRGYTTHCGYF.

C6 and C30 form a disulfide bridge.

Its subcellular location is the secreted. It is found in the nematocyst. Potently and reversibly blocks mammalian Kv11/KCNH/ERG voltage-gated potassium channels. Acts as a gating-modifier toxin that shifts the voltage-dependence of ERG activation in the positive direction and suppresses its current amplitudes elicited by strong depolarizing pulses that maximally activate the channels. In Bunodosoma caissarum (Sea anemone), this protein is Toxin BcV.